A 707-amino-acid polypeptide reads, in one-letter code: MQNSESGSDSPASVALCSSAAAQAPVAQPVTASPQRVLVQAAGSAPKGAQMQPLSLPRVQQVTQQVQPAQHVYPAQLQYVEGGDAVFTNGALRTAYAYNPEPQMYAPSSAASYFEAPGGAQVTVAGSSPPAVPSHSMVGITMDVGGSPIVSSAGAYLIHGGMDGTRHTLAHTSRSSPATLEMAIENLQKSEGITSHKSGLLNSHLQWLLDNYETAEGVSLPRSSLYNHYLRHCQEHKLDPVNAASFGKLIRSVFMGLRTRRLGTRGNSKYHYYGIRLKPDSPLNRLQEDTQYMAMRQQPVHQKPRYRPAQKTDSLGESGSHSSLHSTPEQAMAAQSQHHQQYIDVSHVFPEFPAPDLGSVLLQESITLHDVKALQLAYRRHCEATLDVVMNLQFHYIEKLWLSFWNSKSSSDGPTSLPASDEEPEGAVLPKDKLVSLCKCDPVLRWMRTCDHILYQALVEILIPDVLRPVPSTLTQAIRNFAKSLEGWLTNAMSDFPQQVIQTKVGVVSAFAQTLRRYTSLNHLAQAARAVLQNTSQINQMLSDLNRVDFANVQEQASWVCQCEEGVVQRLEQDFKLTLQQQSSLDQWASWLDNVVTQVLKQHAGSPSFPKAARQFLLKWSFYSSMVIRDLTLRSAASFGSFHLIRLLYDEYMFYLVEHRVAEATGETPIAVMGEFNDLASLSLTLLDKGGCVWALPPVHSGGGGSP.

Residue Ser-33 is modified to Phosphoserine. Positions 204 to 279 (HLQWLLDNYE…YHYYGIRLKP (76 aa)) form a DNA-binding region, RFX-type winged-helix. A disordered region spans residues 297–337 (QQPVHQKPRYRPAQKTDSLGESGSHSSLHSTPEQAMAAQSQ). Positions 315 to 337 (LGESGSHSSLHSTPEQAMAAQSQ) are enriched in low complexity. A Phosphoserine modification is found at Ser-420.

Belongs to the RFX family. In terms of assembly, homodimer; probably only forms homodimers in testis. Heterodimer; heterodimerizes with RFX1 and RFX3.

Its subcellular location is the nucleus. It localises to the cytoplasm. Its function is as follows. Transcription factor that acts as a key regulator of spermatogenesis. Acts by regulating expression of genes required for the haploid phase during spermiogenesis, such as genes required for cilium assembly and function. Recognizes and binds the X-box, a regulatory motif with DNA sequence 5'-GTNRCC(0-3N)RGYAAC-3' present on promoters. Probably activates transcription of the testis-specific histone gene H1-6. In Bos taurus (Bovine), this protein is DNA-binding protein RFX2 (RFX2).